Consider the following 317-residue polypeptide: 17-beta-hydroxysteroid dehydrogenase type 6 (317 aa).

An N-terminal signal peptide occupies residues 1–17; sequence MWLYLAAFVGLYYLLHW. Residue 33–57 participates in NAD(+) binding; the sequence is FITGCDSGFGNLLARQLDARGLRVL. Asparagine 161 carries an N-linked (GlcNAc...) asparagine glycan. Serine 164 contributes to the substrate binding site. The active-site Proton acceptor is the tyrosine 176. N-linked (GlcNAc...) asparagine glycans are attached at residues asparagine 215 and asparagine 256.

This sequence belongs to the short-chain dehydrogenases/reductases (SDR) family. Detected in liver and prostate (at protein level). Detected in adult liver, lung, brain, placenta, prostate, adrenal gland, testis, mammary gland, spleen, spinal cord and uterus. Detected in caudate nucleus, and at lower levels in amygdala, corpus callosum, hippocampus, substantia nigra and thalamus. Detected in fetal lung, liver and brain.

It localises to the microsome membrane. It is found in the early endosome membrane. It catalyses the reaction all-trans-retinol--[retinol-binding protein] + NAD(+) = all-trans-retinal--[retinol-binding protein] + NADH + H(+). The catalysed reaction is all-trans-retinol + NAD(+) = all-trans-retinal + NADH + H(+). The enzyme catalyses androsterone + NAD(+) = 5alpha-androstan-3,17-dione + NADH + H(+). It carries out the reaction testosterone + NAD(+) = androst-4-ene-3,17-dione + NADH + H(+). It catalyses the reaction 5alpha-androstane-3alpha,17beta-diol + NAD(+) = 17beta-hydroxy-5alpha-androstan-3-one + NADH + H(+). The catalysed reaction is 17beta-estradiol + NAD(+) = estrone + NADH + H(+). The enzyme catalyses 17beta-estradiol + NADP(+) = estrone + NADPH + H(+). It carries out the reaction 3alpha-hydroxy-5alpha-pregnan-20-one + NAD(+) = 5alpha-pregnane-3,20-dione + NADH + H(+). It catalyses the reaction 5alpha-androstane-3beta,17beta-diol + NAD(+) = 17beta-hydroxy-5alpha-androstan-3-one + NADH + H(+). The catalysed reaction is 3beta-hydroxy-5alpha-androstan-17-one + NAD(+) = 5alpha-androstan-3,17-dione + NADH + H(+). Functionally, NAD-dependent oxidoreductase with broad substrate specificity that shows both oxidative and reductive activity (in vitro). Has 17-beta-hydroxysteroid dehydrogenase activity towards various steroids (in vitro). Converts 5-alpha-androstan-3-alpha,17-beta-diol to androsterone and estradiol to estrone (in vitro). Has 3-alpha-hydroxysteroid dehydrogenase activity towards androsterone (in vitro). Has retinol dehydrogenase activity towards all-trans-retinol (in vitro). Can convert androsterone to epi-androsterone. Androsterone is first oxidized to 5-alpha-androstane-3,17-dione and then reduced to epi-andosterone. Can act on both C-19 and C-21 3-alpha-hydroxysteroids. The chain is 17-beta-hydroxysteroid dehydrogenase type 6 (HSD17B6) from Homo sapiens (Human).